The sequence spans 575 residues: Golgi-associated kinase 1A (575 aa).

A signal peptide spans 1–29 (MASWLRRKLRGKRRPVIAFCLLMILSAMA). The propeptide at 30–119 (VTRFPPQRPS…GDLRHPGRVR (90 aa)) is removed in mature form. The interval 53–58 (TGAPAT) is O-glycosylated at one site. Positions 143–153 (VGDPGTKDLGH) are enriched in basic and acidic residues. The segment at 143 to 162 (VGDPGTKDLGHPQHGSPIQE) is disordered. Residues 437–575 (RYCCGFEPEP…NLTLFRDEDP (139 aa)) constitute a propeptide, removed in mature form. A glycan (N-linked (GlcNAc...) asparagine) is linked at asparagine 566.

Belongs to the GASK family. In terms of processing, O-glycosylated with core 1 or possibly core 8 glycans. Proteolytically cleaved. Cleaved at Arg-120 and Arg-437 leading to a processed mature product of 35 kDa. The cleavage takes place in the Golgi apparatus. In terms of tissue distribution, expressed in skin, lung and colon (at protein level).

The protein resides in the secreted. It localises to the endoplasmic reticulum. The protein localises to the golgi apparatus. It is found in the membrane. Its subcellular location is the caveola. The chain is Golgi-associated kinase 1A from Homo sapiens (Human).